The sequence spans 184 residues: ATP synthase subunit b, chloroplastic (184 aa).

The helical transmembrane segment at 27–49 (LATNPINLSVVLGVLIFFGKGVL) threads the bilayer.

Belongs to the ATPase B chain family. F-type ATPases have 2 components, F(1) - the catalytic core - and F(0) - the membrane proton channel. F(1) has five subunits: alpha(3), beta(3), gamma(1), delta(1), epsilon(1). F(0) has four main subunits: a(1), b(1), b'(1) and c(10-14). The alpha and beta chains form an alternating ring which encloses part of the gamma chain. F(1) is attached to F(0) by a central stalk formed by the gamma and epsilon chains, while a peripheral stalk is formed by the delta, b and b' chains.

The protein resides in the plastid. It is found in the chloroplast thylakoid membrane. In terms of biological role, f(1)F(0) ATP synthase produces ATP from ADP in the presence of a proton or sodium gradient. F-type ATPases consist of two structural domains, F(1) containing the extramembraneous catalytic core and F(0) containing the membrane proton channel, linked together by a central stalk and a peripheral stalk. During catalysis, ATP synthesis in the catalytic domain of F(1) is coupled via a rotary mechanism of the central stalk subunits to proton translocation. Functionally, component of the F(0) channel, it forms part of the peripheral stalk, linking F(1) to F(0). The polypeptide is ATP synthase subunit b, chloroplastic (Gossypium barbadense (Sea Island cotton)).